The chain runs to 396 residues: MIIEPRMRGFICLTAHPAGCEQNVKNQIEYIKSKGAIAGAKKVLVIGASTGFGLASRITSAFGSDAATIGVFFEKPPVEGKTASPGWYNSAAFEKEAHKAGLYAKSINGDAFSNEIKRETLDLIKADLGQVDLVIYSLASPVRTNPNTGVTHRSVLKPIGQTFTNKTVDFHTGNVSEVSIAPANEEDIENTVAVMGGEDWAMWIDALKNENLLAEGATTIAYSYIGPELTEAVYRKGTIGRAKDHLEATAFTITDTLKSLGGKAYVSVNKALVTQASSAIPVIPLYISLLYKIMKEEGIHEGCIEQIQRLFQDRLYNGSEVPVDEKGRIRIDDWEMREDVQAKVAALWKEATTETLPSIGDLAGYRNDFLNLFGFEFAGVDYKADTNEVVNIESIK.

NAD(+)-binding positions include 47 to 52 (GASTGF), 73 to 74 (FE), 110 to 111 (DA), and 138 to 139 (LA). Tyr224 is a binding site for substrate. The active-site Proton donor is the Tyr234. NAD(+) is bound by residues Lys243 and 272–274 (LVT).

The protein belongs to the TER reductase family. Monomer.

It catalyses the reaction a 2,3-saturated acyl-[ACP] + NAD(+) = a (2E)-enoyl-[ACP] + NADH + H(+). The protein operates within lipid metabolism; fatty acid biosynthesis. Its function is as follows. Involved in the final reduction of the elongation cycle of fatty acid synthesis (FAS II). Catalyzes the reduction of a carbon-carbon double bond in an enoyl moiety that is covalently linked to an acyl carrier protein (ACP). The protein is Enoyl-[acyl-carrier-protein] reductase [NADH] of Flavobacterium johnsoniae (strain ATCC 17061 / DSM 2064 / JCM 8514 / BCRC 14874 / CCUG 350202 / NBRC 14942 / NCIMB 11054 / UW101) (Cytophaga johnsonae).